We begin with the raw amino-acid sequence, 286 residues long: Polyamine aminopropyltransferase (286 aa).

One can recognise a PABS domain in the interval lysine 5–asparagine 238. Histidine 64 and aspartate 88 together coordinate spermidine. Residues glutamate 108 and aspartate 140–glycine 141 contribute to the S-methyl-5'-thioadenosine site. Catalysis depends on aspartate 158, which acts as the Proton acceptor. Aspartate 158–aspartate 161 is a spermidine binding site.

Belongs to the spermidine/spermine synthase family. In terms of assembly, homodimer or homotetramer.

It localises to the cytoplasm. It catalyses the reaction S-adenosyl 3-(methylsulfanyl)propylamine + putrescine = S-methyl-5'-thioadenosine + spermidine + H(+). It participates in amine and polyamine biosynthesis; spermidine biosynthesis; spermidine from putrescine: step 1/1. In terms of biological role, catalyzes the irreversible transfer of a propylamine group from the amino donor S-adenosylmethioninamine (decarboxy-AdoMet) to putrescine (1,4-diaminobutane) to yield spermidine. This is Polyamine aminopropyltransferase from Buchnera aphidicola subsp. Acyrthosiphon pisum (strain 5A).